The sequence spans 130 residues: Early E3B 14.5 kDa protein (130 aa).

The first 19 residues, 1 to 19, serve as a signal peptide directing secretion; that stretch reads MKRIVTFVLLIFCALPVLC. Residues 53–77 form a helical membrane-spanning segment; sequence AWLYAIISVMVFCSTIFALAIYPYL.

Belongs to the adenoviridae E3_14 family. In terms of processing, phosphorylated on serine; O-glycosylated, but not N-glycosylated.

Its subcellular location is the host membrane. Functionally, down-regulates the EGF receptor and prevents cytolysis by TNF. The chain is Early E3B 14.5 kDa protein from Human adenovirus C serotype 6 (HAdV-6).